The chain runs to 184 residues: Ribosome maturation factor RimM (184 aa).

The region spanning 101–174 (PDEYYDHQLV…RVVIADRPGL (74 aa)) is the PRC barrel domain.

This sequence belongs to the RimM family. In terms of assembly, binds ribosomal protein uS19.

It is found in the cytoplasm. Functionally, an accessory protein needed during the final step in the assembly of 30S ribosomal subunit, possibly for assembly of the head region. Essential for efficient processing of 16S rRNA. May be needed both before and after RbfA during the maturation of 16S rRNA. It has affinity for free ribosomal 30S subunits but not for 70S ribosomes. This Nocardioides sp. (strain ATCC BAA-499 / JS614) protein is Ribosome maturation factor RimM.